We begin with the raw amino-acid sequence, 195 residues long: Pyridoxal 5'-phosphate synthase subunit PdxT (195 aa).

Residue 46 to 48 (GES) participates in L-glutamine binding. The active-site Nucleophile is the C78. L-glutamine contacts are provided by residues R107 and 135–136 (IR). Catalysis depends on charge relay system residues H172 and E174.

Belongs to the glutaminase PdxT/SNO family. In terms of assembly, in the presence of PdxS, forms a dodecamer of heterodimers. Only shows activity in the heterodimer.

It carries out the reaction aldehydo-D-ribose 5-phosphate + D-glyceraldehyde 3-phosphate + L-glutamine = pyridoxal 5'-phosphate + L-glutamate + phosphate + 3 H2O + H(+). It catalyses the reaction L-glutamine + H2O = L-glutamate + NH4(+). Its pathway is cofactor biosynthesis; pyridoxal 5'-phosphate biosynthesis. Functionally, catalyzes the hydrolysis of glutamine to glutamate and ammonia as part of the biosynthesis of pyridoxal 5'-phosphate. The resulting ammonia molecule is channeled to the active site of PdxS. The sequence is that of Pyridoxal 5'-phosphate synthase subunit PdxT from Corynebacterium jeikeium (strain K411).